Reading from the N-terminus, the 293-residue chain is Ribosomal protein L11 methyltransferase (293 aa).

S-adenosyl-L-methionine-binding residues include Thr-145, Gly-166, Asp-188, and Asn-230.

Belongs to the methyltransferase superfamily. PrmA family.

The protein resides in the cytoplasm. It catalyses the reaction L-lysyl-[protein] + 3 S-adenosyl-L-methionine = N(6),N(6),N(6)-trimethyl-L-lysyl-[protein] + 3 S-adenosyl-L-homocysteine + 3 H(+). In terms of biological role, methylates ribosomal protein L11. The polypeptide is Ribosomal protein L11 methyltransferase (Escherichia coli O8 (strain IAI1)).